Here is a 250-residue protein sequence, read N- to C-terminus: Hemocyanin, units C and D (250 aa).

H1 is a Cu cation binding site. A unit C region spans residues H1 to A106. C7 and C18 form a disulfide bridge. The segment at residues C19–H21 is a cross-link (2'-(S-cysteinyl)-histidine (Cys-His)). Cu cation contacts are provided by H21 and H143. Positions V107 to H250 are unit D. C149 and C160 are disulfide-bonded. The 2'-(S-cysteinyl)-histidine (Cys-His) cross-link spans C161–H163. H172 contributes to the Cu cation binding site.

The protein belongs to the tyrosinase family. Hemocyanin subfamily. Decamers of large identical subunits (390 kDa), each containing 8 globular oxygen-binding functional units. Cu(2+) is required as a cofactor.

Hemocyanins are copper-containing oxygen carriers occurring freely dissolved in the hemolymph of many mollusks and arthropods. This is Hemocyanin, units C and D from Sepia officinalis (Common cuttlefish).